Consider the following 374-residue polypeptide: Queuine tRNA-ribosyltransferase (374 aa).

The active-site Proton acceptor is aspartate 95. Substrate-binding positions include 95–99, aspartate 149, glutamine 191, and glycine 218; that span reads DSGGF. Residues 249-255 form an RNA binding region; it reads GVGTYRE. Aspartate 268 acts as the Nucleophile in catalysis. The interval 273 to 277 is RNA binding; important for wobble base 34 recognition; it reads TRWAR. Zn(2+) contacts are provided by cysteine 306, cysteine 308, cysteine 311, and histidine 337.

It belongs to the queuine tRNA-ribosyltransferase family. As to quaternary structure, homodimer. Within each dimer, one monomer is responsible for RNA recognition and catalysis, while the other monomer binds to the replacement base PreQ1. Zn(2+) serves as cofactor.

The enzyme catalyses 7-aminomethyl-7-carbaguanine + guanosine(34) in tRNA = 7-aminomethyl-7-carbaguanosine(34) in tRNA + guanine. It functions in the pathway tRNA modification; tRNA-queuosine biosynthesis. Functionally, catalyzes the base-exchange of a guanine (G) residue with the queuine precursor 7-aminomethyl-7-deazaguanine (PreQ1) at position 34 (anticodon wobble position) in tRNAs with GU(N) anticodons (tRNA-Asp, -Asn, -His and -Tyr). Catalysis occurs through a double-displacement mechanism. The nucleophile active site attacks the C1' of nucleotide 34 to detach the guanine base from the RNA, forming a covalent enzyme-RNA intermediate. The proton acceptor active site deprotonates the incoming PreQ1, allowing a nucleophilic attack on the C1' of the ribose to form the product. After dissociation, two additional enzymatic reactions on the tRNA convert PreQ1 to queuine (Q), resulting in the hypermodified nucleoside queuosine (7-(((4,5-cis-dihydroxy-2-cyclopenten-1-yl)amino)methyl)-7-deazaguanosine). The protein is Queuine tRNA-ribosyltransferase of Nostoc sp. (strain PCC 7120 / SAG 25.82 / UTEX 2576).